The following is an 80-amino-acid chain: Translation initiation factor IF-1 (80 aa).

In terms of domain architecture, S1-like spans Glu-6–Lys-80.

Belongs to the IF-1 family. Component of the 30S ribosomal translation pre-initiation complex which assembles on the 30S ribosome in the order IF-2 and IF-3, IF-1 and N-formylmethionyl-tRNA(fMet); mRNA recruitment can occur at any time during PIC assembly.

It is found in the cytoplasm. Functionally, one of the essential components for the initiation of protein synthesis. Stabilizes the binding of IF-2 and IF-3 on the 30S subunit to which N-formylmethionyl-tRNA(fMet) subsequently binds. Helps modulate mRNA selection, yielding the 30S pre-initiation complex (PIC). Upon addition of the 50S ribosomal subunit IF-1, IF-2 and IF-3 are released leaving the mature 70S translation initiation complex. This is Translation initiation factor IF-1 from Deinococcus geothermalis (strain DSM 11300 / CIP 105573 / AG-3a).